Here is a 411-residue protein sequence, read N- to C-terminus: Putative binding protein BRA0748/BS1330_II0741 (411 aa).

An N-terminal signal peptide occupies residues 1–25 (MLIRKWKAGLLAGLSILALASSADA).

It belongs to the bacterial solute-binding protein 1 family. In terms of assembly, the complex is composed of two ATP-binding proteins (BRA0745), two transmembrane proteins (BRA0749) and a solute-binding protein (BRA0748).

Its subcellular location is the periplasm. In terms of biological role, probably part of an ABC transporter complex. The polypeptide is Putative binding protein BRA0748/BS1330_II0741 (Brucella suis biovar 1 (strain 1330)).